The primary structure comprises 836 residues: Subtilisin-like protease PIMMS2 (836 aa).

Active-site charge relay system residues include Asp155, His222, and Ser414. Residues 802 to 836 (EKKNKYNNSVLKRNEMKSHNNSQKTPKIIPRKYSR) are disordered.

The protein belongs to the peptidase S8 family.

It localises to the cell membrane. The catalysed reaction is Hydrolysis of proteins with broad specificity for peptide bonds, and a preference for a large uncharged residue in P1. Hydrolyzes peptide amides.. In terms of biological role, probable serine protease which plays a role in ookinete traversal of the mosquito host midgut epithelium. This chain is Subtilisin-like protease PIMMS2, found in Plasmodium berghei (strain Anka).